The sequence spans 1119 residues: MMTSVSSDHCRGAREKPQISAAQSTQPQKQVVQATAEQMRLAQVIFDKNDSDFEAKVKQLMEVTGKNQDECIVALHDCNGDVNKAINILLEGNSDTTSWETVGCKKKNFAKENSENKENREKKSEKESSRGRGNNNRKGRGGNRGREFRGEENGIDCNQVDKPSDRGKRARGRGFGRGRGRGAGRFSTQGMGTFNPADYSDSTSTDVCGTKLVVWEAAQNGADEGTELASNTHNIAQDLSNKSSYGLKGAWKNSVEEWTTEDWTEDLSETKVFTASSAPAENHILPGQSIDLVALLQKPVPHSQASEANSFETSQQQGFGQALVFTNSQHNNQMAPGTGSSTAVNSCSPQSLSSVLGSGFGELAPPKMANITSSQILDQLKAPSLGQFTTTPSTQQNSTSHPTTTTSWDLKPPTSQSSVLSHLDFKSQPEPSPVLSQLSQRQQHQSQAVTVPPPGLESFPSQAKLRESTPGDSPSTVNKLLQLPSTTIENISVSVHQPQPKHIKLAKRRIPPASKIPASAVEMPGSADVTGLNVQFGALEFGSEPSLSEFGSAPSSENSNQIPISLYSKSLSEPLNTSLSMTSAVQNSTYTTSVITSCSLTSSSLNSASPVAMSSSYDQSSVHNRIPYQSPVSSSESAPGTIMNGHGGGRSQQTLDTPKTTGPPSALPSVSSLPSTTSCTALLPSTSQHTGDLTSSPLSQLSSSLSSHQSSLSAHAALSSSTSHTHASVESASSHQSSATFSTAATSVSSSASSGASLSSSMNTANSLCLGGTPASASSSSSRAAPLVTSGKAPPNLPQGVPPLLHNQYLVGPGGLLPAYPIYGYDELQMLQSRLPVDYYGIPFAAPTALASRDGSLANNPYPGDVTKFGRGDSASPAPATTPAQPQQSQSQTHHTAQQPFVNPALPPGYSYTGLPYYTGMPSAFQYGPTMFVPPASAKQHGVNLSTPTPPFQQASGYGQHGYSTGYDDLTQGTAAGDYSKGGYAGSSQAPNKSAGSGPGKGVSVSSSTTGLPDMTGSVYNKTQTFDKQGFHAGTPPPFSLPSVLGSTGPLASGAAPGYAPPPFLHILPAHQQPHSQLLHHHLPQDAQSGSGQRSQPSSLQPKSQASKPAYGNSPYWTN.

The segment at 1–26 (MMTSVSSDHCRGAREKPQISAAQSTQ) is disordered. The segment covering 8-17 (DHCRGAREKP) has biased composition (basic and acidic residues). Residues 48-92 (KNDSDFEAKVKQLMEVTGKNQDECIVALHDCNGDVNKAINILLEG) form the UBA domain. A coiled-coil region spans residues 105-130 (KKKNFAKENSENKENREKKSEKESSR). A compositionally biased stretch (basic and acidic residues) spans 110–130 (AKENSENKENREKKSEKESSR). Disordered regions lie at residues 110–202 (AKEN…YSDS), 385–476 (LGQF…SPST), 622–736 (VHNR…SSHQ), 853–905 (RDGS…VNPA), 937–966 (SAKQ…YSTG), 982–1020 (GGYA…GSVY), and 1082–1119 (HLPQ…YWTN). Arginine 166 bears the Omega-N-methylarginine mark. The segment covering 168–182 (KRARGRGFGRGRGRG) has biased composition (basic residues). Residues 389-407 (TTTPSTQQNSTSHPTTTTS) show a composition bias toward low complexity. A phosphoserine mark is found at serine 432, serine 439, serine 473, and serine 630. A compositionally biased stretch (low complexity) spans 435-447 (LSQLSQRQQHQSQ). Polar residues predominate over residues 651-662 (SQQTLDTPKTTG). Residues 663-678 (PPSALPSVSSLPSTTS) are compositionally biased toward low complexity. Positions 679–694 (CTALLPSTSQHTGDLT) are enriched in polar residues. Low complexity-rich tracts occupy residues 695–736 (SSPL…SSHQ) and 874–900 (SASP…AQQP). Residues 943 to 957 (VNLSTPTPPFQQASG) show a composition bias toward polar residues. Composition is skewed to low complexity over residues 1002 to 1011 (GVSVSSSTTG) and 1088 to 1102 (QSGS…SLQP).

May interact with ANXA2.

The protein resides in the nucleus. It localises to the chromosome. Its subcellular location is the cytoplasm. Recruits the ubiquitination machinery to RNA polymerase II for polyubiquitination, removal and degradation, when the transcription-coupled nucleotide excision repair (TC-NER) machinery fails to resolve DNA damage. May promote the degradation of ANXA2. The chain is Ubiquitin-associated protein 2 from Homo sapiens (Human).